Here is a 495-residue protein sequence, read N- to C-terminus: Type-1 histone deacetylase 1 (495 aa).

Asp-94 contributes to the substrate binding site. Residue His-136 is the Proton acceptor of the active site. Gly-144 contacts substrate. A divalent metal cation contacts are provided by Asp-171, His-173, and Asp-259. Tyr-298 contributes to the substrate binding site. The interval 372–495 (PAAAHHDIPP…EDADVDMDSG (124 aa)) is disordered. Positions 396 to 413 (DVRISEADRDKKVHHQGE) are enriched in basic and acidic residues. The span at 425-443 (NYSNGLEATSTSRRNQVSI) shows a compositional bias: polar residues. The span at 454–480 (NSRNNNNNNNNNNNNNNNNNNNSNNNN) shows a compositional bias: low complexity.

This sequence belongs to the histone deacetylase family. HD type 1 subfamily.

Its subcellular location is the nucleus. The protein localises to the cytoplasm. It catalyses the reaction N(6)-acetyl-L-lysyl-[histone] + H2O = L-lysyl-[histone] + acetate. In terms of biological role, responsible for the deacetylation of lysine residues on the N-terminal part of the core histones (H2A, H2B, H3 and H4). Histone deacetylation plays an important role in transcriptional regulation, cell cycle progression and developmental events. Histone deacetylases act via the formation of large multiprotein complexes. The chain is Type-1 histone deacetylase 1 (hdaA) from Dictyostelium discoideum (Social amoeba).